Reading from the N-terminus, the 254-residue chain is Small ribosomal subunit protein uS2 (254 aa).

Belongs to the universal ribosomal protein uS2 family.

The chain is Small ribosomal subunit protein uS2 from Brucella ovis (strain ATCC 25840 / 63/290 / NCTC 10512).